A 696-amino-acid polypeptide reads, in one-letter code: SEC14 domain and spectrin repeat-containing protein 1 (696 aa).

The CRAL-TRIO domain occupies 1 to 153 (MEASVILPIL…DFGGSLTYDH (153 aa)). 3 Spectrin repeats span residues 275–378 (EEIQ…NLLQ), 381–494 (LEFH…LKML), and 500–602 (FKCE…HRLE).

It belongs to the SOLO family. In terms of assembly, interacts (via the spectrin 1 repeat) with TRPC4 and TRPC5 (via CIRB domain). Interacts with CTNNB1.

Its function is as follows. May act as the primary docking protein directing membrane turnover and assembly of the transient receptor potential channels TRPC4 and TRPC5. Binds phospholipids such as phosphatidylinositol monophosphates, phosphatidylinositol diphosphates (PIP2s) and phosphatidic acid, but not less polar lipids including phosphatidylcholine, phosphatidylserine, and phosphatidylinositol. The binding to PIP2s is calcium dependent. Might be involved in the plasma membrane localization of CTNNB1. The protein is SEC14 domain and spectrin repeat-containing protein 1 (Sestd1) of Mus musculus (Mouse).